The sequence spans 497 residues: Beta-glucosidase 8 (497 aa).

An N-terminal signal peptide occupies residues 1–22 (MKHFNLLSIILVIVLATSYIDA). Glutamine 42 lines the a beta-D-glucoside pocket. N-linked (GlcNAc...) asparagine glycosylation is present at asparagine 65. A beta-D-glucoside-binding positions include histidine 139 and 184-185 (NE). The active-site Proton donor is glutamate 185. N-linked (GlcNAc...) asparagine glycosylation occurs at asparagine 202. Tyrosine 319 contacts a beta-D-glucoside. N-linked (GlcNAc...) asparagine glycosylation occurs at asparagine 354. Residues glutamate 387, tryptophan 430, and phenylalanine 446 each coordinate a beta-D-glucoside. Glutamate 387 functions as the Nucleophile in the catalytic mechanism. N-linked (GlcNAc...) asparagine glycosylation is found at asparagine 452, asparagine 474, and asparagine 490.

This sequence belongs to the glycosyl hydrolase 1 family.

It catalyses the reaction Hydrolysis of terminal, non-reducing beta-D-glucosyl residues with release of beta-D-glucose.. This is Beta-glucosidase 8 from Arabidopsis thaliana (Mouse-ear cress).